We begin with the raw amino-acid sequence, 504 residues long: Pentatricopeptide repeat-containing protein At1g09220, mitochondrial (504 aa).

The N-terminal 87 residues, 1–87 (MFLFSSRRIT…FLFNPLLRCY (87 aa)), are a transit peptide targeting the mitochondrion. 10 PPR repeats span residues 76–110 (KLFL…HFLS), 120–156 (DSFT…GFES), 157–187 (HVYV…MPER), 188–222 (NPVT…TVVS), 223–253 (WTTI…DAIK), 255–289 (NEIT…GFVP), 291–321 (DIRV…IPNG), 324–358 (NLVS…GLKP), 359–390 (NRVT…MVNE), and 396–430 (DVKH…EKAV). The tract at residues 431-504 (VWRMLLGACS…AKLPGHSQVT (74 aa)) is type E motif; degenerate.

It belongs to the PPR family. PCMP-E subfamily.

It is found in the mitochondrion. The chain is Pentatricopeptide repeat-containing protein At1g09220, mitochondrial (PCMP-E25) from Arabidopsis thaliana (Mouse-ear cress).